Here is a 543-residue protein sequence, read N- to C-terminus: Carboxypeptidase Y homolog A (543 aa).

Residues 1-17 (MKFLTTGLLATAALAAA) form the signal peptide. The propeptide occupies 18-124 (QEQQVLQAED…KLHNYDLRVK (107 aa)). Intrachain disulfides connect Cys-179/Cys-419, Cys-313/Cys-327, Cys-337/Cys-360, Cys-344/Cys-353, and Cys-382/Cys-389. Residue Asn-210 is glycosylated (N-linked (GlcNAc...) asparagine). Ser-266 is a catalytic residue. Asp-458 is a catalytic residue. An N-linked (GlcNAc...) asparagine glycan is attached at Asn-509. Residue His-520 is part of the active site.

This sequence belongs to the peptidase S10 family.

It localises to the vacuole. The catalysed reaction is Release of a C-terminal amino acid with broad specificity.. Its function is as follows. Vacuolar carboxypeptidase involved in degradation of small peptides. Digests preferentially peptides containing an aliphatic or hydrophobic residue in P1' position, as well as methionine, leucine or phenylalanine in P1 position of ester substrate. The sequence is that of Carboxypeptidase Y homolog A (CPYA) from Trichophyton equinum (Horse ringworm fungus).